The primary structure comprises 142 residues: Transcriptional regulator MraZ (142 aa).

2 SpoVT-AbrB domains span residues Ser5 to Glu51 and Ala77 to Ser120.

The protein belongs to the MraZ family. Forms oligomers.

It localises to the cytoplasm. The protein resides in the nucleoid. The polypeptide is Transcriptional regulator MraZ (Bordetella bronchiseptica (strain ATCC BAA-588 / NCTC 13252 / RB50) (Alcaligenes bronchisepticus)).